Reading from the N-terminus, the 458-residue chain is Bifunctional protein GlmU (458 aa).

Positions 1–230 (MENRYAIILA…FDEAMGVNDR (230 aa)) are pyrophosphorylase. UDP-N-acetyl-alpha-D-glucosamine contacts are provided by residues 9–12 (LAAG), Lys-23, Gln-73, and 78–79 (GT). Asp-103 is a Mg(2+) binding site. Residues Gly-140, Glu-155, Asn-170, and Asn-228 each coordinate UDP-N-acetyl-alpha-D-glucosamine. Asn-228 serves as a coordination point for Mg(2+). The tract at residues 231–251 (VALSTANKIMHRRLNEMHMRN) is linker. Residues 252–458 (GVTFIDPDTT…YAKKLPYMKD (207 aa)) are N-acetyltransferase. The UDP-N-acetyl-alpha-D-glucosamine site is built by Arg-333 and Lys-351. Residue His-363 is the Proton acceptor of the active site. UDP-N-acetyl-alpha-D-glucosamine-binding residues include Tyr-366 and Asn-377. Residues 386–387 (NY), Ser-405, Ala-423, and Arg-440 each bind acetyl-CoA.

This sequence in the N-terminal section; belongs to the N-acetylglucosamine-1-phosphate uridyltransferase family. In the C-terminal section; belongs to the transferase hexapeptide repeat family. In terms of assembly, homotrimer. Mg(2+) serves as cofactor.

The protein resides in the cytoplasm. The catalysed reaction is alpha-D-glucosamine 1-phosphate + acetyl-CoA = N-acetyl-alpha-D-glucosamine 1-phosphate + CoA + H(+). It carries out the reaction N-acetyl-alpha-D-glucosamine 1-phosphate + UTP + H(+) = UDP-N-acetyl-alpha-D-glucosamine + diphosphate. It participates in nucleotide-sugar biosynthesis; UDP-N-acetyl-alpha-D-glucosamine biosynthesis; N-acetyl-alpha-D-glucosamine 1-phosphate from alpha-D-glucosamine 6-phosphate (route II): step 2/2. It functions in the pathway nucleotide-sugar biosynthesis; UDP-N-acetyl-alpha-D-glucosamine biosynthesis; UDP-N-acetyl-alpha-D-glucosamine from N-acetyl-alpha-D-glucosamine 1-phosphate: step 1/1. Its pathway is bacterial outer membrane biogenesis; LPS lipid A biosynthesis. Its function is as follows. Catalyzes the last two sequential reactions in the de novo biosynthetic pathway for UDP-N-acetylglucosamine (UDP-GlcNAc). The C-terminal domain catalyzes the transfer of acetyl group from acetyl coenzyme A to glucosamine-1-phosphate (GlcN-1-P) to produce N-acetylglucosamine-1-phosphate (GlcNAc-1-P), which is converted into UDP-GlcNAc by the transfer of uridine 5-monophosphate (from uridine 5-triphosphate), a reaction catalyzed by the N-terminal domain. The polypeptide is Bifunctional protein GlmU (Enterococcus faecalis (strain ATCC 700802 / V583)).